A 343-amino-acid polypeptide reads, in one-letter code: MMMEHKANMAMVFVQIVYAGMPLLSKVAISQGTNPFVFVFYRQAFAALALSPFAFFLESSKSSPLSFILLLKIFFISLCGLTLSLNLYYVAIENTTATFAAATTNAIPSITFVLALLFRLETVTLKKSHGVAKVTGSMVGMLGALVFAFVKGPSLINHYNSSTIPNGTVPSTKNSVKGSITMLAANTCWCLWIIMQSKVMKEYPAKLRLVALQCLFSCIQSAVWAVAVNRNPSVWKIEFGLPLLSMAYCGIMVTGLTYWLQVWAIEKKGPVFTALYTPLALILTCIVSSFLFKETFYLGSVGGAVLLVCGLYLGLWGKTKEEEIQRYGEKQSQKEIIEEVIIV.

Helical transmembrane passes span 9 to 29 (MAMV…KVAI), 36 to 56 (FVFV…FAFF), 65 to 85 (LSFI…TLSL), 98 to 118 (TFAA…ALLF), 130 to 150 (GVAK…FAFV), 175 to 195 (SVKG…WIIM), 209 to 229 (LVAL…VAVN), 239 to 259 (FGLP…LTYW), 272 to 292 (FTAL…SFLF), and 296 to 316 (FYLG…LGLW). 2 EamA domains span residues 16–139 (IVYA…GSMV) and 188–313 (CWCL…GLYL).

Belongs to the drug/metabolite transporter (DMT) superfamily. Plant drug/metabolite exporter (P-DME) (TC 2.A.7.4) family.

It is found in the membrane. The sequence is that of WAT1-related protein At1g43650 from Arabidopsis thaliana (Mouse-ear cress).